The chain runs to 787 residues: Endonuclease MutS2 (787 aa).

334–341 lines the ATP pocket; that stretch reads GPNTGGKT. The region spanning 712 to 787 is the Smr domain; it reads LDLRGKRYEE…GNGATIVTFK (76 aa).

This sequence belongs to the DNA mismatch repair MutS family. MutS2 subfamily. In terms of assembly, homodimer. Binds to stalled ribosomes, contacting rRNA.

Functionally, endonuclease that is involved in the suppression of homologous recombination and thus may have a key role in the control of bacterial genetic diversity. Acts as a ribosome collision sensor, splitting the ribosome into its 2 subunits. Detects stalled/collided 70S ribosomes which it binds and splits by an ATP-hydrolysis driven conformational change. Acts upstream of the ribosome quality control system (RQC), a ribosome-associated complex that mediates the extraction of incompletely synthesized nascent chains from stalled ribosomes and their subsequent degradation. Probably generates substrates for RQC. In Latilactobacillus sakei subsp. sakei (strain 23K) (Lactobacillus sakei subsp. sakei), this protein is Endonuclease MutS2.